A 270-amino-acid polypeptide reads, in one-letter code: 4-hydroxy-tetrahydrodipicolinate reductase (270 aa).

Residues 9-14 and Glu-35 each bind NAD(+); that span reads GAGGRM. An NADP(+)-binding site is contributed by Arg-36. NAD(+) contacts are provided by residues 99 to 101 and 123 to 126; these read GTT and ASNY. His-156 acts as the Proton donor/acceptor in catalysis. Position 157 (His-157) interacts with (S)-2,3,4,5-tetrahydrodipicolinate. The active-site Proton donor is the Lys-160. 166–167 lines the (S)-2,3,4,5-tetrahydrodipicolinate pocket; the sequence is GT.

Belongs to the DapB family.

Its subcellular location is the cytoplasm. The catalysed reaction is (S)-2,3,4,5-tetrahydrodipicolinate + NAD(+) + H2O = (2S,4S)-4-hydroxy-2,3,4,5-tetrahydrodipicolinate + NADH + H(+). It catalyses the reaction (S)-2,3,4,5-tetrahydrodipicolinate + NADP(+) + H2O = (2S,4S)-4-hydroxy-2,3,4,5-tetrahydrodipicolinate + NADPH + H(+). Its pathway is amino-acid biosynthesis; L-lysine biosynthesis via DAP pathway; (S)-tetrahydrodipicolinate from L-aspartate: step 4/4. Catalyzes the conversion of 4-hydroxy-tetrahydrodipicolinate (HTPA) to tetrahydrodipicolinate. The protein is 4-hydroxy-tetrahydrodipicolinate reductase of Mannheimia succiniciproducens (strain KCTC 0769BP / MBEL55E).